A 182-amino-acid polypeptide reads, in one-letter code: Protein GrpE (182 aa).

The span at 1 to 17 (MEEKKRCEESEKIKEQE) shows a compositional bias: basic and acidic residues. The disordered stretch occupies residues 1 to 33 (MEEKKRCEESEKIKEQENETLPNEDSPSMGKKV).

The protein belongs to the GrpE family. In terms of assembly, homodimer.

It localises to the cytoplasm. Participates actively in the response to hyperosmotic and heat shock by preventing the aggregation of stress-denatured proteins, in association with DnaK and GrpE. It is the nucleotide exchange factor for DnaK and may function as a thermosensor. Unfolded proteins bind initially to DnaJ; upon interaction with the DnaJ-bound protein, DnaK hydrolyzes its bound ATP, resulting in the formation of a stable complex. GrpE releases ADP from DnaK; ATP binding to DnaK triggers the release of the substrate protein, thus completing the reaction cycle. Several rounds of ATP-dependent interactions between DnaJ, DnaK and GrpE are required for fully efficient folding. This Borrelia hermsii (strain HS1 / DAH) protein is Protein GrpE.